The sequence spans 448 residues: tRNA modification GTPase MnmE (448 aa).

Residues Arg-25, Glu-83, and Lys-122 each contribute to the (6S)-5-formyl-5,6,7,8-tetrahydrofolate site. The TrmE-type G domain occupies 218 to 372 (GFKVAIIGKP…LTQKLQKLLD (155 aa)). Residue Asn-228 coordinates K(+). GTP is bound by residues 228-233 (NTGKSS), 247-253 (SDIAGTT), and 272-275 (DTAG). Mg(2+) is bound at residue Ser-232. K(+)-binding residues include Ser-247, Ile-249, and Thr-252. Mg(2+) is bound at residue Thr-253. Lys-448 contributes to the (6S)-5-formyl-5,6,7,8-tetrahydrofolate binding site.

The protein belongs to the TRAFAC class TrmE-Era-EngA-EngB-Septin-like GTPase superfamily. TrmE GTPase family. Homodimer. Heterotetramer of two MnmE and two MnmG subunits. The cofactor is K(+).

The protein resides in the cytoplasm. In terms of biological role, exhibits a very high intrinsic GTPase hydrolysis rate. Involved in the addition of a carboxymethylaminomethyl (cmnm) group at the wobble position (U34) of certain tRNAs, forming tRNA-cmnm(5)s(2)U34. The polypeptide is tRNA modification GTPase MnmE (Nitratiruptor sp. (strain SB155-2)).